The sequence spans 156 residues: Crossover junction endodeoxyribonuclease RuvC (156 aa).

Residues Asp-7, Glu-66, and Asp-138 contribute to the active site. Mg(2+)-binding residues include Asp-7, Glu-66, and Asp-138.

It belongs to the RuvC family. As to quaternary structure, homodimer which binds Holliday junction (HJ) DNA. The HJ becomes 2-fold symmetrical on binding to RuvC with unstacked arms; it has a different conformation from HJ DNA in complex with RuvA. In the full resolvosome a probable DNA-RuvA(4)-RuvB(12)-RuvC(2) complex forms which resolves the HJ. The cofactor is Mg(2+).

The protein localises to the cytoplasm. It catalyses the reaction Endonucleolytic cleavage at a junction such as a reciprocal single-stranded crossover between two homologous DNA duplexes (Holliday junction).. The RuvA-RuvB-RuvC complex processes Holliday junction (HJ) DNA during genetic recombination and DNA repair. Endonuclease that resolves HJ intermediates. Cleaves cruciform DNA by making single-stranded nicks across the HJ at symmetrical positions within the homologous arms, yielding a 5'-phosphate and a 3'-hydroxyl group; requires a central core of homology in the junction. The consensus cleavage sequence is 5'-(A/T)TT(C/G)-3'. Cleavage occurs on the 3'-side of the TT dinucleotide at the point of strand exchange. HJ branch migration catalyzed by RuvA-RuvB allows RuvC to scan DNA until it finds its consensus sequence, where it cleaves and resolves the cruciform DNA. The sequence is that of Crossover junction endodeoxyribonuclease RuvC from Ehrlichia chaffeensis (strain ATCC CRL-10679 / Arkansas).